Here is a 25-residue protein sequence, read N- to C-terminus: Small ribosomal subunit protein eS32 (25 aa).

The segment at 1–25 is disordered; it reads MRAKWRKKRVRRLKRKRRKTRARSK.

It belongs to the eukaryotic ribosomal protein eS32 family. In terms of assembly, component of the small ribosomal subunit.

The protein is Small ribosomal subunit protein eS32 (RPL41) of Quercus suber (Cork oak).